The following is a 1394-amino-acid chain: MILPFEYYFLNDADNSSKSNYNNIQFINENQNNNLRQKPKFYPNNQFLIEQEQDKYENKKIKNYISDQIQLQPKNTPINKMNHFANINNYQDNKFSLESLNQAQQDNLQKEEDLSILSFDSQEELNYLQEGEENNQFLNEGDIFGYQTRYTFFENRNNLLVEDATNKNNNNYNYNYNNNNSSTQRNYDFNYQNTNEMLQKKKKSNFQNKSQSQLNNHKNEEKKPSQQRKEQLMKRFESLSRIYNKELSQTVTNGWLKPSQAKTISQDNNLGSSAAKSSKVFYQQQKPFSAQITNSSLKYAAASNGFQNLDFSYKQKQQLIQQETKNKIKEQQNVESNNRISMKPPKSANLNSYKNISNLKNFKEIILTRPNSKQVKFQQQNSVNSQPSSLVSQPLKIQSIEKNNLNSNLNDQNFYDDFAELGSTETTGFSFQNVFQLAGVPKDFIASPRSPVQELNQKQENRENELDQMLNDHHIYVASSVTNQNQIKNEQTERKPNMFGKTLTTLARPFSKEYSNRKDILKSAQQNVRFNKNLDYLDSQNKVVAKNKKRTIFKINQNNLQGNQKDLQSNQTSSVISQQNSIQQYGDDNYQQNQVLNDDQSPLIKQNSIDLNAAEIIQNDENENTQKENVLQQKKNQSNQIVTSQQQSNNYFKQETTTNTSNFSTTSNRIISLQALRQKNNSTVKNSDNNNQNQTNPQNQNTNLKENNDKQNLKKTKIQSASANQAGQSNNQLQKTFFINSQDEYVRRTLLRMGWKENKLLLNNNFDLKWIYIDSNDDYKFLNDNQFYNHFKNNTELTQKGRLLYNLKNNTQFGVNQELFFPRCYDLGNDQERGEFSNEFNRMNVMNLLKKHIQYIKLRRSQTYQEIKQAYQQKQANKLNAQVKDGIFFAKVTKQKFFSPLMYEDTKRDNRFIFNITVIAEAVEILKKLKRQQEEYIDETRQSRDCQLYIYQTNFKLESMISQYVKINVPFDEEKFVFEKIVGMSKEHWSSPSMKLMKKLYSLYKYFKDADPQFKVSGTKNIWIIKPSANSRGSGIYLVDKLDEAIDSGLKMQARIVQKYIERPLIFQGAKYKKLNNKKFDIRQWVLVTSFKPLKIYFFTSSYLRVCSQSFDLDNIKILSKHLTNFSLNKNSLAKENWDETVVELKDFISYLKEFKNIDYQEDVKPKIKDLVIETIKCAADKIVNRKKSFELYGFDILLDEYAHPWLLEVNLSPACSERSSFLTEMLDAMAYKMFQIVFKQNNLQEDLEINKETAISTAPASCQNPDYDWEEIYNEEQKEYFCEEDNNMQLAFNNDIQLMVIGQKADLKKEKNLDKKYFQYWGAIKIQSKIRSFLAKKKLQRLKNQKFTFAAIKIQQKMRQFLAKKQLNILKKQQQTNINIPIEDFNQVSVIEV.

Disordered regions lie at residues 201–230, 563–582, 620–663, and 682–706; these read KKKS…QRKE, NQKD…QNSI, DENE…TSNF, and STVK…NLKE. A compositionally biased stretch (low complexity) spans 205–216; it reads NFQNKSQSQLNN. Residues 217 to 230 are compositionally biased toward basic and acidic residues; the sequence is HKNEEKKPSQQRKE. Positions 568-582 are enriched in low complexity; that stretch reads QSNQTSSVISQQNSI. Polar residues predominate over residues 627–655; that stretch reads KENVLQQKKNQSNQIVTSQQQSNNYFKQE. Over residues 682–703 the composition is skewed to low complexity; the sequence is STVKNSDNNNQNQTNPQNQNTN. The TTL domain occupies 911–1250; it reads RFIFNITVIA…QNNLQEDLEI (340 aa). ATP is bound by residues 1058 to 1061, Lys1079, and Asp1081; that span reads QKYI. IQ domains follow at residues 1320-1349 and 1348-1377; these read QYWG…QKFT and FTFA…QQQT.

It localises to the cell projection. The protein resides in the cilium. It is found in the cytoplasm. Its subcellular location is the cytoskeleton. The protein localises to the cilium axoneme. Functionally, probable glycylase which modifies tubulin, generating side chains of glycine on the gamma-carboxyl groups of specific glutamate residues within the C-terminal tail of tubulin. The polypeptide is Tubulin glycylase 3E (TTLL3E) (Tetrahymena thermophila (strain SB210)).